We begin with the raw amino-acid sequence, 148 residues long: Protein Turandot Z (148 aa).

Positions 1–23 (MYFAIRLSFVLAVLFCLTGNGSA) are cleaved as a signal peptide.

It belongs to the Turandot family.

It localises to the secreted. In terms of biological role, a humoral factor that may play a role in stress tolerance. The polypeptide is Protein Turandot Z (Drosophila sechellia (Fruit fly)).